The primary structure comprises 441 residues: Glutamate-1-semialdehyde 2,1-aminomutase (441 aa).

The residue at position 276 (Lys-276) is an N6-(pyridoxal phosphate)lysine.

The protein belongs to the class-III pyridoxal-phosphate-dependent aminotransferase family. HemL subfamily. In terms of assembly, homodimer. Requires pyridoxal 5'-phosphate as cofactor.

The protein resides in the cytoplasm. It catalyses the reaction (S)-4-amino-5-oxopentanoate = 5-aminolevulinate. Its pathway is porphyrin-containing compound metabolism; protoporphyrin-IX biosynthesis; 5-aminolevulinate from L-glutamyl-tRNA(Glu): step 2/2. The protein is Glutamate-1-semialdehyde 2,1-aminomutase of Rhodococcus jostii (strain RHA1).